The chain runs to 1038 residues: Rap guanine nucleotide exchange factor 1 (1038 aa).

10–140 provides a ligand contact to a nucleoside 3',5'-cyclic phosphate; that stretch reads RLSPLHTFSD…DILTDETPSD (131 aa). The 83-residue stretch at 234 to 316 folds into the DEP domain; it reads TDNHQVIRDI…KTNSYYRWVQ (83 aa). A nucleoside 3',5'-cyclic phosphate is bound at residue 375–492; the sequence is ALSHLSTMVK…VRLKDYGEDV (118 aa). The 139-residue stretch at 516–654 folds into the N-terminal Ras-GEF domain; it reads CGYSVMAGKA…DILTRIGSIR (139 aa). Residues 795–1028 enclose the Ras-GEF domain; sequence DSQELAHQLF…MQLSYEIEPK (234 aa).

As to quaternary structure, interacts (via C-terminus) with drn-1. As to expression, expressed specifically in neurons including the nerve ring, ventral and dorsal nerve cord motor neurons and tail ganglia.

Functionally, guanine nucleotide-releasing protein. Together with GTPase drn-1, may regulate acetylcholine release at the neuromuscular junctions probably downstream of G-protein gsa-1 and adenylate cyclase acy-1. This is Rap guanine nucleotide exchange factor 1 (epac-1) from Caenorhabditis elegans.